The following is a 474-amino-acid chain: Glutamate--tRNA ligase 1 (474 aa).

The 'HIGH' region motif lies at 10 to 20 (PSPTGFLHIGG). The 'KMSKS' region motif lies at 239-243 (KLSKR). Residue lysine 242 coordinates ATP.

Belongs to the class-I aminoacyl-tRNA synthetase family. Glutamate--tRNA ligase type 1 subfamily. In terms of assembly, monomer.

It localises to the cytoplasm. It catalyses the reaction tRNA(Glu) + L-glutamate + ATP = L-glutamyl-tRNA(Glu) + AMP + diphosphate. Its function is as follows. Catalyzes the attachment of glutamate to tRNA(Glu) in a two-step reaction: glutamate is first activated by ATP to form Glu-AMP and then transferred to the acceptor end of tRNA(Glu). This Methylobacterium sp. (strain 4-46) protein is Glutamate--tRNA ligase 1.